The sequence spans 269 residues: Myelin protein zero-like protein 1 (269 aa).

Residues 1–35 form the signal peptide; that stretch reads MAASAGAGAVIAAPDSRRWLWSVLAAALGLLTAGV. An Ig-like V-type domain is found at 36–146; it reads SALEVYTPKE…VKNPPDIVVQ (111 aa). The Extracellular segment spans residues 36 to 162; the sequence is SALEVYTPKE…YVVEKENLPV (127 aa). Asparagine 50 and asparagine 130 each carry an N-linked (GlcNAc...) asparagine glycan. A disulfide bridge links cysteine 58 with cysteine 135. Residues 163 to 183 traverse the membrane as a helical segment; that stretch reads FPVWVVVGIVTAVVLGLTLLI. Residues 184-269 are Cytoplasmic-facing; the sequence is SMILAVLYRR…SVVYADIRKN (86 aa). The tract at residues 199–238 is disordered; it reads DYTGCSTSESLSPVKQAPRKSPSDTEGLVKSLPSGSHQGP. Polar residues predominate over residues 202–211; the sequence is GCSTSESLSP. A phosphoserine mark is found at serine 204, serine 206, serine 208, serine 210, serine 219, and serine 221. The short motif at 239–244 is the ITIM motif 1 element; the sequence is VIYAQL. Phosphotyrosine is present on tyrosine 241. Serine 260 carries the post-translational modification Phosphoserine. Positions 261-266 match the ITIM motif 2 motif; it reads VVYADI. Tyrosine 263 bears the Phosphotyrosine mark.

Belongs to the myelin P0 protein family. As to quaternary structure, interacts with phosphorylated PTPN11/SHP-2. Post-translationally, phosphorylated on tyrosine residues upon stimulation with pervanadate and concanavalin-A (ConA). Phosphorylation at Tyr-241 and Tyr-263 is required for interaction with PTPN11/SHP-2. Dephosphorylated by PTPN11/SHP-2 (in vitro). N-glycosylated. N-glycosylation is required for concanavalin A binding. As to expression, widely expressed with highest levels in heart, placenta, kidney and pancreas. Isoform 3 is relatively abundant in hematopoietic tissues and fetal liver. Isoform 1 and isoform 3 are expressed in CD14- PB monocytes and pre-B cell progenitors. Isoform 3 appears to be the major isoform in CD34- promyelocytic and promonocytic cells. During differentiation in monocytic cells, the expression level of isoform 3 decreases and that of isoform 1 increases. Isoform 1 is prominent in stromal cells and, to a lesser extent, in umbilical vein endothelial cells and erythroid progenitors. Isoform 2 is expressed in a erythroid progenitor cell line.

It is found in the membrane. Functionally, cell surface receptor, which is involved in signal transduction processes. Recruits PTPN11/SHP-2 to the cell membrane and is a putative substrate of PTPN11/SHP-2. Is a major receptor for concanavalin-A (ConA) and is involved in cellular signaling induced by ConA, which probably includes Src family tyrosine-protein kinases. Isoform 3 seems to have a dominant negative role; it blocks tyrosine phosphorylation of MPZL1 induced by ConA. Isoform 1, but not isoform 2 and isoform 3, may be involved in regulation of integrin-mediated cell motility. The polypeptide is Myelin protein zero-like protein 1 (MPZL1) (Homo sapiens (Human)).